The primary structure comprises 234 residues: Ubiquitin domain-containing protein 1 (234 aa).

Residues 1-47 form a disordered region; that stretch reads MGGCVGTHHDSSGSLNENSDGTGVALGRNQPLKKDKPKWKSDYPMTD. The span at 12–21 shows a compositional bias: polar residues; it reads SGSLNENSDG. Residues 32–41 are compositionally biased toward basic and acidic residues; the sequence is LKKDKPKWKS. Residues 152–227 form the Ubiquitin-like domain; it reads CQLRLRLSTG…VQVIVSQPIP (76 aa).

May be involved in the regulation of cellular senescence through a positive feedback loop with TP53. In Xenopus laevis (African clawed frog), this protein is Ubiquitin domain-containing protein 1 (ubtd1).